The primary structure comprises 432 residues: UPF0597 protein APL_1605 (432 aa).

The protein belongs to the UPF0597 family.

In Actinobacillus pleuropneumoniae serotype 5b (strain L20), this protein is UPF0597 protein APL_1605.